A 1981-amino-acid chain; its full sequence is Nonribosomal peptide synthetase rstn8 (1981 aa).

The segment at 251-638 is adenylation; that stretch reads SYAALEQESA…ELGEIEYQAS (388 aa). In terms of domain architecture, Carrier 1 spans 763–840; sequence HHAGQKYDEM…ELFHRSQKTP (78 aa). Ser800 bears the O-(pantetheine 4'-phosphoryl)serine mark. The tract at residues 883–1293 is condensation 1; that stretch reads EDIYPCSPLQ…DASMGTILSQ (411 aa). The region spanning 1438 to 1514 is the Carrier 2 domain; the sequence is EPLLPLEATL…CLASTLNSRP (77 aa). O-(pantetheine 4'-phosphoryl)serine is present on Ser1475. The tract at residues 1586-1978 is condensation 1; sequence EEQIDLVSFA…TFAQSIERII (393 aa). The disordered stretch occupies residues 1754-1774; sequence HHHHQHEGRQHHGASETNGNR.

This sequence belongs to the NRP synthetase family. The cofactor is pantetheine 4'-phosphate.

It catalyses the reaction 2 L-tryptophan = cyclo(L-Trp-L-Trp) + 2 H2O. The protein operates within alkaloid biosynthesis. Nonribosomal peptide synthetase; part of the gene cluster that mediates the biosynthesis of okaramine B, a prenylated indole alkaloid that possesses an unusual octacyclic ring system, including a four-membered azetidine ring and an eight-membered azocine ring, and that exhibits insecticidal activity against silkworm larvae. Within the pathway, okaA acts as a bimodular non-ribosomal peptide synthetase (NRPS) that condenses two tryptophan molecules into cyclo(L-Trp-L-Trp). Prenylation by the prenyltransferase okaC then leads to the formation of cyclo(N8-(alpha,alpha-dimethylallyl)-L-Trp-6a-(alpha,alpha-dime-thylallyl)-L-Trp). This is followed by indole 2,3-epoxidation by the FAD-dependent monooxygenase okaB to facilitate the formation of the hexahydropyrrolo[2,3-b]indole (HPI) moiety of okaramine C. The cytochrome P450 monooxygenase okaD then likely catalyzes formation of the eight-membered ring of okaramine A. The dioxygenase okaE further forms the unusual 2-dimethyl-3-methyl-azetidine ring to yield 12-deshydroxyl okaramine E, as well as the hydroxylation of 12-deshydroxyl okaramine E to produce okaramine E. The cytochrome P450 monoxygenase okaG converts 12-deshydroxyl okaramine E into 3-desmethyl okaramine B which is further methylated by the methyltransferase okaF into okaramine B. In a shunt pathway, okaG and okaF together are also able to convert okaramine E into okaramine D. Okaramine H is produced by nonenzymatic conversion from okaramine A. This chain is Nonribosomal peptide synthetase rstn8, found in Penicillium ochrochloron.